The following is a 415-amino-acid chain: FXa-directed anticoagulant (415 aa).

The first 17 residues, M1–T17, serve as a signal peptide directing secretion. N-linked (GlcNAc...) asparagine glycans are attached at residues N117, N166, N216, and N320.

This sequence belongs to the serpin family. (Microbial infection) Interacts with Zika virus envelope protein E and Zika virus-like particles; the interaction does not affect Zika virus replication in human endothelial cells and keratinocytes. In terms of processing, the N-terminus is blocked. In terms of tissue distribution, female salivary gland (at protein level). Not detected in female carcass without head and salivary glands. Not detected in male tissues.

It localises to the secreted. In terms of biological role, anticoagulant serpin-type protein inhibiting host coagulation factor Xa (F10). Does not inhibit host thrombin (F2) and trypsin. Its function is as follows. (Microbial infection) Does not affect Zika virus replication in human endothelial cells and keratinocytes. The polypeptide is FXa-directed anticoagulant (Aedes aegypti (Yellowfever mosquito)).